We begin with the raw amino-acid sequence, 151 residues long: Putative pre-16S rRNA nuclease (151 aa).

This sequence belongs to the YqgF nuclease family.

Its subcellular location is the cytoplasm. Could be a nuclease involved in processing of the 5'-end of pre-16S rRNA. The sequence is that of Putative pre-16S rRNA nuclease from Neisseria gonorrhoeae (strain ATCC 700825 / FA 1090).